Reading from the N-terminus, the 243-residue chain is 1-(5-phosphoribosyl)-5-[(5-phosphoribosylamino)methylideneamino] imidazole-4-carboxamide isomerase (243 aa).

Asp-8 (proton acceptor) is an active-site residue. Asp-130 acts as the Proton donor in catalysis.

Belongs to the HisA/HisF family.

The protein localises to the cytoplasm. It catalyses the reaction 1-(5-phospho-beta-D-ribosyl)-5-[(5-phospho-beta-D-ribosylamino)methylideneamino]imidazole-4-carboxamide = 5-[(5-phospho-1-deoxy-D-ribulos-1-ylimino)methylamino]-1-(5-phospho-beta-D-ribosyl)imidazole-4-carboxamide. It participates in amino-acid biosynthesis; L-histidine biosynthesis; L-histidine from 5-phospho-alpha-D-ribose 1-diphosphate: step 4/9. This is 1-(5-phosphoribosyl)-5-[(5-phosphoribosylamino)methylideneamino] imidazole-4-carboxamide isomerase from Acinetobacter baumannii (strain AB307-0294).